A 198-amino-acid polypeptide reads, in one-letter code: Prostamide/prostaglandin F synthase (198 aa).

Tyrosine 108 bears the Phosphotyrosine mark.

This sequence belongs to the peroxiredoxin-like PRXL2 family. Prostamide/prostaglandin F synthase subfamily.

The protein localises to the cytoplasm. It localises to the cytosol. It catalyses the reaction prostaglandin H2 + [thioredoxin]-dithiol = prostaglandin F2alpha + [thioredoxin]-disulfide. It carries out the reaction prostamide F2alpha + [thioredoxin]-disulfide = prostamide H2 + [thioredoxin]-dithiol. Functionally, catalyzes the reduction of prostaglandin-ethanolamide H(2) (prostamide H(2)) to prostamide F(2alpha) with NADPH as proton donor. Also able to reduce prostaglandin H(2) to prostaglandin F(2alpha). This is Prostamide/prostaglandin F synthase from Homo sapiens (Human).